Here is a 471-residue protein sequence, read N- to C-terminus: Glutamate--tRNA ligase 2 (471 aa).

The 'HIGH' region motif lies at 15–25 (PSPTGYLHIGG). The 'KMSKS' region motif lies at 243 to 247 (KLSKR). K246 lines the ATP pocket.

Belongs to the class-I aminoacyl-tRNA synthetase family. Glutamate--tRNA ligase type 1 subfamily. In terms of assembly, monomer.

The protein localises to the cytoplasm. It carries out the reaction tRNA(Glu) + L-glutamate + ATP = L-glutamyl-tRNA(Glu) + AMP + diphosphate. Catalyzes the attachment of glutamate to tRNA(Glu) in a two-step reaction: glutamate is first activated by ATP to form Glu-AMP and then transferred to the acceptor end of tRNA(Glu). In Cereibacter sphaeroides (strain ATCC 17025 / ATH 2.4.3) (Rhodobacter sphaeroides), this protein is Glutamate--tRNA ligase 2.